Here is a 613-residue protein sequence, read N- to C-terminus: Arginine--tRNA ligase (613 aa).

The 'HIGH' region motif lies at 123–133 (PNVAKPMHVGH).

This sequence belongs to the class-I aminoacyl-tRNA synthetase family. As to quaternary structure, monomer.

The protein resides in the cytoplasm. The catalysed reaction is tRNA(Arg) + L-arginine + ATP = L-arginyl-tRNA(Arg) + AMP + diphosphate. This chain is Arginine--tRNA ligase, found in Caulobacter sp. (strain K31).